We begin with the raw amino-acid sequence, 552 residues long: T-box transcription factor TBX4 (552 aa).

The segment covering 1 to 14 (MLQDKGLSESEEAF) has biased composition (basic and acidic residues). The interval 1–50 (MLQDKGLSESEEAFRAPGPALGEASNTSTTNAPEPALATPGLSGAALSSP) is disordered. The T-box DNA-binding region spans 76-256 (LHEKELWKKF…NNPFAKGFRG (181 aa)). Position 514 is a phosphoserine (serine 514).

It is found in the nucleus. Transcriptional regulator that has an essential role in the organogenesis of lungs, pelvis, and hindlimbs. In Mus musculus (Mouse), this protein is T-box transcription factor TBX4 (Tbx4).